The following is a 127-amino-acid chain: Ribosome-binding factor A (127 aa).

This sequence belongs to the RbfA family. Monomer. Binds 30S ribosomal subunits, but not 50S ribosomal subunits or 70S ribosomes.

The protein localises to the cytoplasm. One of several proteins that assist in the late maturation steps of the functional core of the 30S ribosomal subunit. Associates with free 30S ribosomal subunits (but not with 30S subunits that are part of 70S ribosomes or polysomes). Required for efficient processing of 16S rRNA. May interact with the 5'-terminal helix region of 16S rRNA. The sequence is that of Ribosome-binding factor A from Nitrosococcus oceani (strain ATCC 19707 / BCRC 17464 / JCM 30415 / NCIMB 11848 / C-107).